The sequence spans 507 residues: MEAVELGAHLTLPEVVAVARHGARVVLTPEVRQRVARASEMVERLVRERRPVYGITTGFGKFSDVPISAEQTEALQRNLLMSHACAVGEPLAAEVVRAMLLLRAQALSRGHSGIRAETLEMLVAFLNLGLTPVVPEQGSLGASGDLAPLAHMSLPLIGLGEAVVNGERLSGAEALQRVGLRPLTLTAKEGLALINGTQAMTALGSLGLHDAQVLLKTADIAAAMTAEALGAIPAAWDPRVQALRLHTGQQAAARNLRRLTEGSRLTTRPGQMRTQDPYTLRCLPQVHGASRTAIEHVAQVLDWEMNAVTDNPLLFPDDDEVISGGNFHGQPVALALDYLAIAVAELGDIAERRIERLVNPQLSGLPAFLTRNGGVHSGLMITQYTAASLVSENKVLAHPASVDSIPSSANQEDHVSMGTTAARKARQVIANVRRVLAIELLCAAQALEFVGPERLAPATRAAYAAIRERVAPLSGDRVLAPDIEALAELVHNGELVAAVEAVAGPLE.

A cross-link (5-imidazolinone (Ala-Gly)) is located at residues 142 to 144 (ASG). Ser-143 is modified (2,3-didehydroalanine (Ser)).

This sequence belongs to the PAL/histidase family. Post-translationally, contains an active site 4-methylidene-imidazol-5-one (MIO), which is formed autocatalytically by cyclization and dehydration of residues Ala-Ser-Gly.

The protein resides in the cytoplasm. The catalysed reaction is L-histidine = trans-urocanate + NH4(+). It participates in amino-acid degradation; L-histidine degradation into L-glutamate; N-formimidoyl-L-glutamate from L-histidine: step 1/3. This Symbiobacterium thermophilum (strain DSM 24528 / JCM 14929 / IAM 14863 / T) protein is Histidine ammonia-lyase.